The following is a 129-amino-acid chain: Ribulose bisphosphate carboxylase small subunit (129 aa).

A disordered region spans residues 109-129; that stretch reads LRMTRTESNGRSQHYMWETQR.

The protein belongs to the RuBisCO small chain family. Heterohexadecamer of 8 large and 8 small subunits.

In terms of biological role, ruBisCO catalyzes two reactions: the carboxylation of D-ribulose 1,5-bisphosphate, the primary event in carbon dioxide fixation, as well as the oxidative fragmentation of the pentose substrate. Both reactions occur simultaneously and in competition at the same active site. Although the small subunit is not catalytic it is essential for maximal activity. The chain is Ribulose bisphosphate carboxylase small subunit from Rhizobium meliloti (strain 1021) (Ensifer meliloti).